The chain runs to 429 residues: Ribosomal RNA small subunit methyltransferase B (429 aa).

S-adenosyl-L-methionine is bound by residues 254-260 (CAAPGGK), aspartate 277, aspartate 303, and aspartate 322. The Nucleophile role is filled by cysteine 375.

This sequence belongs to the class I-like SAM-binding methyltransferase superfamily. RsmB/NOP family.

It localises to the cytoplasm. It carries out the reaction cytidine(967) in 16S rRNA + S-adenosyl-L-methionine = 5-methylcytidine(967) in 16S rRNA + S-adenosyl-L-homocysteine + H(+). Specifically methylates the cytosine at position 967 (m5C967) of 16S rRNA. In Pectobacterium carotovorum subsp. carotovorum (strain PC1), this protein is Ribosomal RNA small subunit methyltransferase B.